The primary structure comprises 332 residues: D-alanine--D-alanine ligase (332 aa).

Residues 1–17 are compositionally biased toward polar residues; it reads MPMTMTQSATNPTATPV. The segment at 1-28 is disordered; it reads MPMTMTQSATNPTATPVSANKASANAAT. Residues 18–28 are compositionally biased toward low complexity; that stretch reads SANKASANAAT. Positions 132 to 329 constitute an ATP-grasp domain; sequence KQLWHGCGLS…FEQLCWHILA (198 aa). 158–213 is an ATP binding site; it reads VNTLGLPLIVKPVHEGSSIGMSKVNTLDELPKAYEVAAGCGDVVMAEKWITGREFT. Mg(2+) is bound by residues D283, E296, and N298.

Belongs to the D-alanine--D-alanine ligase family. Mg(2+) is required as a cofactor. Requires Mn(2+) as cofactor.

It is found in the cytoplasm. The catalysed reaction is 2 D-alanine + ATP = D-alanyl-D-alanine + ADP + phosphate + H(+). The protein operates within cell wall biogenesis; peptidoglycan biosynthesis. Cell wall formation. The polypeptide is D-alanine--D-alanine ligase (Psychrobacter sp. (strain PRwf-1)).